A 481-amino-acid polypeptide reads, in one-letter code: Protein nucleotidyltransferase YdiU (481 aa).

Positions 85, 87, 88, 108, 120, 121, 171, and 178 each coordinate ATP. Catalysis depends on aspartate 248, which acts as the Proton acceptor. 2 residues coordinate Mg(2+): asparagine 249 and aspartate 258. Aspartate 258 provides a ligand contact to ATP. The interval 458-481 (HPGLAEFQQPPTPEQKGLQLSCSS) is disordered.

Belongs to the SELO family. Mg(2+) serves as cofactor. Mn(2+) is required as a cofactor.

It carries out the reaction L-seryl-[protein] + ATP = 3-O-(5'-adenylyl)-L-seryl-[protein] + diphosphate. It catalyses the reaction L-threonyl-[protein] + ATP = 3-O-(5'-adenylyl)-L-threonyl-[protein] + diphosphate. The catalysed reaction is L-tyrosyl-[protein] + ATP = O-(5'-adenylyl)-L-tyrosyl-[protein] + diphosphate. The enzyme catalyses L-histidyl-[protein] + UTP = N(tele)-(5'-uridylyl)-L-histidyl-[protein] + diphosphate. It carries out the reaction L-seryl-[protein] + UTP = O-(5'-uridylyl)-L-seryl-[protein] + diphosphate. It catalyses the reaction L-tyrosyl-[protein] + UTP = O-(5'-uridylyl)-L-tyrosyl-[protein] + diphosphate. Functionally, nucleotidyltransferase involved in the post-translational modification of proteins. It can catalyze the addition of adenosine monophosphate (AMP) or uridine monophosphate (UMP) to a protein, resulting in modifications known as AMPylation and UMPylation. In Hydrogenovibrio crunogenus (strain DSM 25203 / XCL-2) (Thiomicrospira crunogena), this protein is Protein nucleotidyltransferase YdiU.